The primary structure comprises 225 residues: Germin-like protein 8-7 (225 aa).

The first 23 residues, 1 to 23, serve as a signal peptide directing secretion; that stretch reads MASPSSFCLLAVLLALVSWQAIA. An intrachain disulfide couples C33 to C48. The region spanning 63–213 is the Cupin type-1 domain; it reads AMLDTPRKTN…AFQVEKGTID (151 aa). A glycan (N-linked (GlcNAc...) asparagine) is linked at N77. Residues H110, H112, and E117 each coordinate Mn(2+). N136 carries an N-linked (GlcNAc...) asparagine glycan. H158 contacts Mn(2+).

It belongs to the germin family. As to quaternary structure, oligomer (believed to be a pentamer but probably hexamer).

It localises to the secreted. The protein resides in the extracellular space. Its subcellular location is the apoplast. Functionally, plays a role in broad-spectrum disease resistance. Probably has no oxalate oxidase activity even if the active site is conserved. The chain is Germin-like protein 8-7 (GER6) from Oryza sativa subsp. japonica (Rice).